The primary structure comprises 120 residues: Large ribosomal subunit protein uL29 (120 aa).

Belongs to the universal ribosomal protein uL29 family. As to quaternary structure, component of the large ribosomal subunit. Mature ribosomes consist of a small (40S) and a large (60S) subunit. The 40S subunit contains about 32 different proteins and 1 molecule of RNA (18S). The 60S subunit contains 45 different proteins and 3 molecules of RNA (25S, 5.8S and 5S).

It localises to the cytoplasm. Functionally, component of the ribosome, a large ribonucleoprotein complex responsible for the synthesis of proteins in the cell. The small ribosomal subunit (SSU) binds messenger RNAs (mRNAs) and translates the encoded message by selecting cognate aminoacyl-transfer RNA (tRNA) molecules. The large subunit (LSU) contains the ribosomal catalytic site termed the peptidyl transferase center (PTC), which catalyzes the formation of peptide bonds, thereby polymerizing the amino acids delivered by tRNAs into a polypeptide chain. The nascent polypeptides leave the ribosome through a tunnel in the LSU and interact with protein factors that function in enzymatic processing, targeting, and the membrane insertion of nascent chains at the exit of the ribosomal tunnel. The chain is Large ribosomal subunit protein uL29 from Candida albicans (strain SC5314 / ATCC MYA-2876) (Yeast).